A 295-amino-acid chain; its full sequence is Tyrosine recombinase XerC (295 aa).

One can recognise a Core-binding (CB) domain in the interval 1–85 (MHILLQKYYN…ALRQFLNYLV (85 aa)). The 180-residue stretch at 106 to 285 (YLPKNMDMEQ…DFQHLAQVYD (180 aa)) folds into the Tyr recombinase domain. Residues arginine 145, lysine 169, histidine 237, arginine 240, and histidine 263 contribute to the active site. The active-site O-(3'-phospho-DNA)-tyrosine intermediate is the tyrosine 272.

Belongs to the 'phage' integrase family. XerC subfamily. Forms a cyclic heterotetrameric complex composed of two molecules of XerC and two molecules of XerD.

It localises to the cytoplasm. In terms of biological role, site-specific tyrosine recombinase, which acts by catalyzing the cutting and rejoining of the recombining DNA molecules. The XerC-XerD complex is essential to convert dimers of the bacterial chromosome into monomers to permit their segregation at cell division. It also contributes to the segregational stability of plasmids. This Histophilus somni (strain 2336) (Haemophilus somnus) protein is Tyrosine recombinase XerC.